A 403-amino-acid polypeptide reads, in one-letter code: NADH-quinone oxidoreductase subunit D (403 aa).

Belongs to the complex I 49 kDa subunit family. As to quaternary structure, NDH-1 is composed of 15 different subunits. Subunits NuoB, C, D, E, F, and G constitute the peripheral sector of the complex.

The protein localises to the cell membrane. The enzyme catalyses a quinone + NADH + 5 H(+)(in) = a quinol + NAD(+) + 4 H(+)(out). In terms of biological role, NDH-1 shuttles electrons from NADH, via FMN and iron-sulfur (Fe-S) centers, to quinones in the respiratory chain. The immediate electron acceptor for the enzyme in this species is believed to be a menaquinone. Couples the redox reaction to proton translocation (for every two electrons transferred, four hydrogen ions are translocated across the cytoplasmic membrane), and thus conserves the redox energy in a proton gradient. This Deinococcus geothermalis (strain DSM 11300 / CIP 105573 / AG-3a) protein is NADH-quinone oxidoreductase subunit D.